A 304-amino-acid chain; its full sequence is Cell surface-binding protein OPG105 (304 aa).

One can recognise an Alpha-carbonic anhydrase domain in the interval 1–235 (MPQQLSPINI…NDDTQVYYSG (235 aa)). Residues 1 to 275 (MPQQLSPINI…YQKYIEGNKT (275 aa)) lie on the Virion surface side of the membrane. Residues 276–294 (FAIIAIVFVFILTAILFFM) form a helical membrane-spanning segment. Residues 295–304 (SQRYSREKQN) are Intravirion-facing.

The protein belongs to the alpha-carbonic anhydrase family. In terms of assembly, homodimer; disulfide-linked. In terms of processing, apparently non-glycosylated.

The protein resides in the virion membrane. Functionally, binds to chondroitin sulfate on the cell surface to provide virion attachment to target cell. The chain is Cell surface-binding protein OPG105 (OPG105) from Vaccinia virus (strain Ankara) (VACV).